We begin with the raw amino-acid sequence, 626 residues long: Elongation factor 4 (626 aa).

Positions 14 to 195 constitute a tr-type G domain; sequence SVIRNFCIIA…QIVMDVPAPH (182 aa). GTP is bound by residues 26–31 and 142–145; these read DHGKST and NKID. The segment at 603-626 is disordered; the sequence is LSTGEDSNDRDTKDKIRAAQKTEG. Positions 609-626 are enriched in basic and acidic residues; it reads SNDRDTKDKIRAAQKTEG.

The protein belongs to the TRAFAC class translation factor GTPase superfamily. Classic translation factor GTPase family. LepA subfamily.

It localises to the cell membrane. It carries out the reaction GTP + H2O = GDP + phosphate + H(+). Functionally, required for accurate and efficient protein synthesis under certain stress conditions. May act as a fidelity factor of the translation reaction, by catalyzing a one-codon backward translocation of tRNAs on improperly translocated ribosomes. Back-translocation proceeds from a post-translocation (POST) complex to a pre-translocation (PRE) complex, thus giving elongation factor G a second chance to translocate the tRNAs correctly. Binds to ribosomes in a GTP-dependent manner. The sequence is that of Elongation factor 4 from Bifidobacterium longum subsp. infantis (strain ATCC 15697 / DSM 20088 / JCM 1222 / NCTC 11817 / S12).